Reading from the N-terminus, the 340-residue chain is 4-amino-5-hydroxymethyl-2-methylpyrimidine phosphate synthase THI11 (340 aa).

K62 is subject to N6-(pyridoxal phosphate)lysine. H66 is a catalytic residue. 115 to 118 (GEFG) is a binding site for pyridoxal 5'-phosphate. Positions 195–199 (CCCFC) match the CCCFC; essential for catalytic activity, may be the site of iron coordination motif.

It belongs to the NMT1/THI5 family. As to quaternary structure, homodimer. Fe cation is required as a cofactor.

The catalysed reaction is N(6)-(pyridoxal phosphate)-L-lysyl-[4-amino-5-hydroxymethyl-2-methylpyrimidine phosphate synthase] + L-histidyl-[4-amino-5-hydroxymethyl-2-methylpyrimidine phosphate synthase] + 2 Fe(3+) + 4 H2O = L-lysyl-[4-amino-5-hydroxymethyl-2-methylpyrimidine phosphate synthase] + (2S)-2-amino-5-hydroxy-4-oxopentanoyl-[4-amino-5-hydroxymethyl-2-methylpyrimidine phosphate synthase] + 4-amino-2-methyl-5-(phosphooxymethyl)pyrimidine + 3-oxopropanoate + 2 Fe(2+) + 2 H(+). It functions in the pathway cofactor biosynthesis; thiamine diphosphate biosynthesis. Responsible for the formation of the pyrimidine heterocycle in the thiamine biosynthesis pathway. Catalyzes the formation of hydroxymethylpyrimidine phosphate (HMP-P) from histidine and pyridoxal phosphate (PLP). The protein uses PLP and the active site histidine to form HMP-P, generating an inactive enzyme. The enzyme can only undergo a single turnover, which suggests it is a suicide enzyme. In Saccharomyces cerevisiae (strain ATCC 204508 / S288c) (Baker's yeast), this protein is 4-amino-5-hydroxymethyl-2-methylpyrimidine phosphate synthase THI11.